The primary structure comprises 227 residues: Germin-like protein 3-3 (227 aa).

A signal peptide spans methionine 1–alanine 26. Cysteine 36 and cysteine 51 are oxidised to a cystine. The 153-residue stretch at serine 65 to glutamate 217 folds into the Cupin type-1 domain. N-linked (GlcNAc...) asparagine glycans are attached at residues asparagine 78 and asparagine 81. Histidine 114, histidine 116, glutamate 121, and histidine 163 together coordinate Mn(2+).

This sequence belongs to the germin family. Oligomer (believed to be a pentamer but probably hexamer).

Its subcellular location is the secreted. It is found in the extracellular space. It localises to the apoplast. Functionally, may play a role in plant defense. Probably has no oxalate oxidase activity even if the active site is conserved. The protein is Germin-like protein 3-3 of Oryza sativa subsp. japonica (Rice).